A 445-amino-acid polypeptide reads, in one-letter code: UDP-N-acetylmuramoylalanine--D-glutamate ligase (445 aa).

126-132 (GTSGKTT) serves as a coordination point for ATP.

It belongs to the MurCDEF family.

It is found in the cytoplasm. It carries out the reaction UDP-N-acetyl-alpha-D-muramoyl-L-alanine + D-glutamate + ATP = UDP-N-acetyl-alpha-D-muramoyl-L-alanyl-D-glutamate + ADP + phosphate + H(+). The protein operates within cell wall biogenesis; peptidoglycan biosynthesis. In terms of biological role, cell wall formation. Catalyzes the addition of glutamate to the nucleotide precursor UDP-N-acetylmuramoyl-L-alanine (UMA). The protein is UDP-N-acetylmuramoylalanine--D-glutamate ligase of Nitratidesulfovibrio vulgaris (strain DSM 19637 / Miyazaki F) (Desulfovibrio vulgaris).